A 69-amino-acid polypeptide reads, in one-letter code: Cytochrome c oxidase subunit 8A, mitochondrial (69 aa).

The N-terminal 25 residues, 1–25 (MSVLTPLLLRGLTGSARRLPVLRAQ), are a transit peptide targeting the mitochondrion. The short motif at 2–19 (SVLTPLLLRGLTGSARRL) is the SIFI-degron element. Over 26–36 (VHSKPPREKLG) the chain is Mitochondrial matrix. Residues 37–60 (TMDVAIGLTSCFVCFLLPSGWVLS) form a helical membrane-spanning segment. The Mitochondrial intermembrane segment spans residues 61 to 69 (HLETYKKRE).

The protein belongs to the cytochrome c oxidase VIII family. Component of the cytochrome c oxidase (complex IV, CIV), a multisubunit enzyme composed of 14 subunits. The complex is composed of a catalytic core of 3 subunits MT-CO1, MT-CO2 and MT-CO3, encoded in the mitochondrial DNA, and 11 supernumerary subunits COX4I, COX5A, COX5B, COX6A, COX6B, COX6C, COX7A, COX7B, COX7C, COX8 and NDUFA4, which are encoded in the nuclear genome. The complex exists as a monomer or a dimer and forms supercomplexes (SCs) in the inner mitochondrial membrane with NADH-ubiquinone oxidoreductase (complex I, CI) and ubiquinol-cytochrome c oxidoreductase (cytochrome b-c1 complex, complex III, CIII), resulting in different assemblies (supercomplex SCI(1)III(2)IV(1) and megacomplex MCI(2)III(2)IV(2)). In response to mitochondrial stress, the precursor protein is ubiquitinated by the SIFI complex in the cytoplasm before mitochondrial import, leading to its degradation. Within the SIFI complex, UBR4 initiates ubiquitin chain that are further elongated or branched by KCMF1.

Its subcellular location is the mitochondrion inner membrane. Its pathway is energy metabolism; oxidative phosphorylation. Its function is as follows. Component of the cytochrome c oxidase, the last enzyme in the mitochondrial electron transport chain which drives oxidative phosphorylation. The respiratory chain contains 3 multisubunit complexes succinate dehydrogenase (complex II, CII), ubiquinol-cytochrome c oxidoreductase (cytochrome b-c1 complex, complex III, CIII) and cytochrome c oxidase (complex IV, CIV), that cooperate to transfer electrons derived from NADH and succinate to molecular oxygen, creating an electrochemical gradient over the inner membrane that drives transmembrane transport and the ATP synthase. Cytochrome c oxidase is the component of the respiratory chain that catalyzes the reduction of oxygen to water. Electrons originating from reduced cytochrome c in the intermembrane space (IMS) are transferred via the dinuclear copper A center (CU(A)) of subunit 2 and heme A of subunit 1 to the active site in subunit 1, a binuclear center (BNC) formed by heme A3 and copper B (CU(B)). The BNC reduces molecular oxygen to 2 water molecules using 4 electrons from cytochrome c in the IMS and 4 protons from the mitochondrial matrix. The chain is Cytochrome c oxidase subunit 8A, mitochondrial (COX8A) from Eulemur fulvus fulvus (Brown lemur).